Here is a 187-residue protein sequence, read N- to C-terminus: MSRPIVISGPSGTGKSTLLKKLFAEYPDSFGFSVSSTTRTPRAGEVNGKDYNFVSVDEFKSMIKNNEFIEWAQFSGNYYGSTVASVKQVSKSGKTCILDIDMQGVKSVKAIPELNARFLFIAPPSVEDLKKRLEGRGTETEESINKRLSAAQAELAYAETGAHDKVIVNDDLDKAYKELKDFIFAEK.

S2 is subject to N-acetylserine. The Guanylate kinase-like domain maps to 2 to 184; sequence SRPIVISGPS…AYKELKDFIF (183 aa). 9–16 contacts ATP; the sequence is GPSGTGKS. GMP-binding positions include S35, 39-42, Y51, E70, 79-81, and D101; these read RTPR and YGS. S149 carries the phosphoserine modification. The residue at position 157 (Y157) is a Phosphotyrosine.

The protein belongs to the guanylate kinase family. In terms of assembly, monomer.

It catalyses the reaction GMP + ATP = GDP + ADP. Catalyzes the reversible transfer of the terminal phosphoryl group of ATP to the acceptor molecule GMP. Essential for recycling GMP and indirectly, cGMP. The sequence is that of Guanylate kinase (GUK1) from Saccharomyces cerevisiae (strain ATCC 204508 / S288c) (Baker's yeast).